The sequence spans 246 residues: Major prion protein (246 aa).

Residues 1-15 (MLVVFVATWSDLGLC) form the signal peptide. The tract at residues 16 to 223 (KKRPKPGGWN…ESQAYYQRGS (208 aa)) is interaction with GRB2, ERI3 and SYN1. A disordered region spans residues 18 to 100 (RPKPGGWNTG…QWHKPSKPKT (83 aa)). Repeat copies occupy residues 44 to 52 (PQGGGGWGQ), 53 to 60 (PHGGGWGQ), 61 to 68 (PHGGGWGQ), 69 to 76 (PHGGGWGQ), and 77 to 84 (PHGGGWGQ). Residues 44–84 (PQGGGGWGQPHGGGWGQPHGGGWGQPHGGGWGQPHGGGWGQ) form a 5 X 8 AA tandem repeats of P-H-G-G-G-W-G-Q region. The span at 45 to 88 (QGGGGWGQPHGGGWGQPHGGGWGQPHGGGWGQPHGGGWGQGGGT) shows a compositional bias: gly residues. Cu(2+) contacts are provided by histidine 54, glycine 55, glycine 56, histidine 62, glycine 63, glycine 64, histidine 70, glycine 71, glycine 72, histidine 78, glycine 79, and glycine 80. Residues 91-100 (QWHKPSKPKT) show a composition bias toward basic residues. Cysteine 172 and cysteine 207 are oxidised to a cystine. N-linked (GlcNAc...) asparagine glycosylation is found at asparagine 174 and asparagine 190. A lipid anchor (GPI-anchor amidated serine) is attached at serine 223. The propeptide at 224 to 246 (SMVLFSSPPVILLISFLIFLIVG) is removed in mature form.

Belongs to the prion family. As to quaternary structure, monomer and homodimer. Has a tendency to aggregate into amyloid fibrils containing a cross-beta spine, formed by a steric zipper of superposed beta-strands. Soluble oligomers may represent an intermediate stage on the path to fibril formation. Copper binding may promote oligomerization. Interacts with GRB2, APP, ERI3/PRNPIP and SYN1. Mislocalized cytosolically exposed PrP interacts with MGRN1; this interaction alters MGRN1 subcellular location and causes lysosomal enlargement. Interacts with KIAA1191.

The protein resides in the cell membrane. The protein localises to the golgi apparatus. Functionally, its primary physiological function is unclear. Has cytoprotective activity against internal or environmental stresses. May play a role in neuronal development and synaptic plasticity. May be required for neuronal myelin sheath maintenance. May play a role in iron uptake and iron homeostasis. Soluble oligomers are toxic to cultured neuroblastoma cells and induce apoptosis (in vitro). Association with GPC1 (via its heparan sulfate chains) targets PRNP to lipid rafts. Also provides Cu(2+) or Zn(2+) for the ascorbate-mediated GPC1 deaminase degradation of its heparan sulfate side chains. The sequence is that of Major prion protein (PRNP) from Erythrocebus patas (Red guenon).